Reading from the N-terminus, the 132-residue chain is Small ribosomal subunit protein uS11 (132 aa).

This sequence belongs to the universal ribosomal protein uS11 family. As to quaternary structure, part of the 30S ribosomal subunit.

In terms of biological role, located on the platform of the 30S subunit. This is Small ribosomal subunit protein uS11 (rps11) from Korarchaeum cryptofilum (strain OPF8).